The sequence spans 217 residues: Peroxiredoxin (217 aa).

A Thioredoxin domain is found at 2-159 (VVIGEKFPEV…IVRLVKALQT (158 aa)). Cys46 functions as the Cysteine sulfenic acid (-SOH) intermediate in the catalytic mechanism. Arg122 is a substrate binding site.

It belongs to the peroxiredoxin family. Prx6 subfamily. In terms of assembly, homodecamer. Pentamer of dimers that assemble into a ring structure.

It is found in the cytoplasm. The catalysed reaction is a hydroperoxide + [thioredoxin]-dithiol = an alcohol + [thioredoxin]-disulfide + H2O. Functionally, thiol-specific peroxidase that catalyzes the reduction of hydrogen peroxide and organic hydroperoxides to water and alcohols, respectively. Plays a role in cell protection against oxidative stress by detoxifying peroxides. This is Peroxiredoxin from Methanococcus maripaludis (strain DSM 14266 / JCM 13030 / NBRC 101832 / S2 / LL).